A 758-amino-acid chain; its full sequence is Catalase-peroxidase (758 aa).

The span at 1-10 shows a compositional bias: polar residues; that stretch reads MSDTQDNAPA. The tract at residues 1 to 59 is disordered; the sequence is MSDTQDNAPASAQGVDQKAAAGCPVAHDSVTAHGSESESPAIDSPTPHSGGRPRTNRDW. A cross-link (tryptophyl-tyrosyl-methioninium (Trp-Tyr) (with M-276)) is located at residues 128 to 250; the sequence is WHAAGTYRID…VGATEMGLIY (123 aa). Catalysis depends on His-129, which acts as the Proton acceptor. A cross-link (tryptophyl-tyrosyl-methioninium (Tyr-Met) (with W-128)) is located at residues 250–276; that stretch reads YVNPEGPRGNADPAAAAHFIRETFRRM. Residue His-291 participates in heme b binding.

The protein belongs to the peroxidase family. Peroxidase/catalase subfamily. As to quaternary structure, homodimer or homotetramer. It depends on heme b as a cofactor. Formation of the three residue Trp-Tyr-Met cross-link is important for the catalase, but not the peroxidase activity of the enzyme.

The enzyme catalyses H2O2 + AH2 = A + 2 H2O. It carries out the reaction 2 H2O2 = O2 + 2 H2O. Its function is as follows. Bifunctional enzyme with both catalase and broad-spectrum peroxidase activity. This chain is Catalase-peroxidase, found in Salinispora arenicola (strain CNS-205).